Reading from the N-terminus, the 424-residue chain is 3-isopropylmalate dehydratase large subunit 1 (424 aa).

3 residues coordinate [4Fe-4S] cluster: C303, C363, and C366.

The protein belongs to the aconitase/IPM isomerase family. LeuC type 2 subfamily. Heterodimer of LeuC and LeuD. It depends on [4Fe-4S] cluster as a cofactor.

It catalyses the reaction (2R,3S)-3-isopropylmalate = (2S)-2-isopropylmalate. It functions in the pathway amino-acid biosynthesis; L-leucine biosynthesis; L-leucine from 3-methyl-2-oxobutanoate: step 2/4. Catalyzes the isomerization between 2-isopropylmalate and 3-isopropylmalate, via the formation of 2-isopropylmaleate. The protein is 3-isopropylmalate dehydratase large subunit 1 of Pyrococcus furiosus (strain ATCC 43587 / DSM 3638 / JCM 8422 / Vc1).